Reading from the N-terminus, the 159-residue chain is uncharacterized protein (159 aa).

Helical transmembrane passes span 59-79 (IGAL…ALVY) and 91-113 (VFSV…RRVC).

The protein localises to the cell membrane. This is an uncharacterized protein from Treponema pallidum (strain Nichols).